Here is a 139-residue protein sequence, read N- to C-terminus: D-ribose pyranase (139 aa).

Residue His20 is the Proton donor of the active site. Substrate is bound by residues Asp28, His106, and 128-130 (YAN).

The protein belongs to the RbsD / FucU family. RbsD subfamily. As to quaternary structure, homodecamer.

Its subcellular location is the cytoplasm. The catalysed reaction is beta-D-ribopyranose = beta-D-ribofuranose. It functions in the pathway carbohydrate metabolism; D-ribose degradation; D-ribose 5-phosphate from beta-D-ribopyranose: step 1/2. In terms of biological role, catalyzes the interconversion of beta-pyran and beta-furan forms of D-ribose. This Pectobacterium atrosepticum (strain SCRI 1043 / ATCC BAA-672) (Erwinia carotovora subsp. atroseptica) protein is D-ribose pyranase.